The following is a 260-amino-acid chain: 14-3-3 protein 4 (260 aa).

A disordered region spans residues 238 to 260 (DNADDVGDDIKEASKPESGEGQQ). A compositionally biased stretch (basic and acidic residues) spans 245-260 (DDIKEASKPESGEGQQ).

Belongs to the 14-3-3 family. In terms of assembly, homodimer.

This Solanum lycopersicum (Tomato) protein is 14-3-3 protein 4 (TFT4).